The sequence spans 332 residues: Probable cation efflux system protein MT2084 (332 aa).

5 consecutive transmembrane segments (helical) span residues 46–66, 75–95, 113–133, 145–165, and 202–222; these read ISLLVLGLTALIQIVIVVMSG, IHNFADALTAVPLWIAFALGA, AGSFVVAMITMSAIIAGYEAI, VGWVALAGLVGFIGNEWVALY, and VALGFPLADPIVGLLITAAIL.

The protein belongs to the cation diffusion facilitator (CDF) transporter (TC 2.A.4) family.

Its subcellular location is the cell membrane. The sequence is that of Probable cation efflux system protein MT2084 from Mycobacterium tuberculosis (strain CDC 1551 / Oshkosh).